The sequence spans 692 residues: Elongation factor G (692 aa).

Residues 8–283 (EKVRNIGIAA…AVVDYLPAPT (276 aa)) enclose the tr-type G domain. GTP contacts are provided by residues 17 to 24 (AHIDAGKT), 81 to 85 (DTPGH), and 135 to 138 (NKMD).

It belongs to the TRAFAC class translation factor GTPase superfamily. Classic translation factor GTPase family. EF-G/EF-2 subfamily.

It is found in the cytoplasm. Catalyzes the GTP-dependent ribosomal translocation step during translation elongation. During this step, the ribosome changes from the pre-translocational (PRE) to the post-translocational (POST) state as the newly formed A-site-bound peptidyl-tRNA and P-site-bound deacylated tRNA move to the P and E sites, respectively. Catalyzes the coordinated movement of the two tRNA molecules, the mRNA and conformational changes in the ribosome. The chain is Elongation factor G from Nitratiruptor sp. (strain SB155-2).